Consider the following 148-residue polypeptide: UPF0756 membrane protein NGK_2061 (148 aa).

Transmembrane regions (helical) follow at residues 10–32 (LVTL…ATIL), 50–70 (HGLN…LVSG), 85–105 (MISA…GVPL), and 116–136 (LLIG…GPLI).

It belongs to the UPF0756 family.

The protein localises to the cell membrane. The chain is UPF0756 membrane protein NGK_2061 from Neisseria gonorrhoeae (strain NCCP11945).